A 292-amino-acid polypeptide reads, in one-letter code: Polyketide transferase af380 (292 aa).

The tract at residues 46–267 (DVAVWFQQQG…FDLVAGRGHM (222 aa)) is abhydrolase domain.

It belongs to the polyketide transferase af380 family.

It carries out the reaction fumagillol + dodecapentaneoyl-[polyketide synthase] = prefumagillin + holo-[polyketide synthase]. It functions in the pathway secondary metabolite biosynthesis; terpenoid biosynthesis. Functionally, polyketide transferase; part of the gene cluster that mediates the biosynthesis of fumagillin, a meroterpenoid that has numerous biological activities including irreversible inhibition of human type 2 methionine aminopeptidase (METAP2). Within the pathway, the polyketide transferase af380 catalyzes the transfer of a dodecapentaenoyl group synthesized by the polyketide synthase af370 onto 5R-hydroxy-seco-sesquiterpene to produce prefumagillin. The pathway begins with the conversion of farnesyl pyrophosphate (FPP) to beta-trans-bergamotene by the membrane-bound beta-trans-bergamotene synthase af520. The multifunctional cytochrome P450 monooxygenase af510 then converts beta-trans-bergamotene into 5-keto-demethoxyfumagillol via several oxydation steps. 5-keto-demethoxyfumagillol is then subjected to successive C-6 hydroxylation and O-methylation by the dioxygenase af480 and O-methyltransferase af390-400, respectively, to yield 5-keto-fumagillol, which is then stereoselectively reduced by the keto-reductase af490 to 5R-hydroxy-seco-sesquiterpene. The next step is the polyketide transferase af380-catalyzed transfer of a dodecapentaenoyl group synthesized by the polyketide synthase af370 onto 5R-hydroxy-seco-sesquiterpene which leads to the production of prefumagillin. Finally, oxidative cleavage by the monooxygenase af470 converts prefumagillin to fumagillin. In Aspergillus fumigatus (strain ATCC MYA-4609 / CBS 101355 / FGSC A1100 / Af293) (Neosartorya fumigata), this protein is Polyketide transferase af380.